A 240-amino-acid polypeptide reads, in one-letter code: Adapter protein MecA (240 aa).

Positions 118–138 (EQRAQQQKHSHKSEQKQTKQR) are disordered.

This sequence belongs to the MecA family. Homodimer.

Enables the recognition and targeting of unfolded and aggregated proteins to the ClpC protease or to other proteins involved in proteolysis. The sequence is that of Adapter protein MecA from Staphylococcus haemolyticus (strain JCSC1435).